Reading from the N-terminus, the 500-residue chain is Keratin, type II cuticular Hb1 (500 aa).

Positions methionine 1–glutamate 106 are head. An IF rod domain is found at glutamate 106–leucine 417. A coil 1A region spans residues lysine 107–tyrosine 141. Residues glutamine 142–leucine 151 are linker 1. The tract at residues glutamate 152–alanine 252 is coil 1B. A Glycyl lysine isopeptide (Lys-Gly) (interchain with G-Cter in SUMO1) cross-link involves residue lysine 212. Residues histidine 253 to leucine 269 are linker 12. A coil 2 region spans residues asparagine 270 to glutamate 413. The segment at glutamate 414–cysteine 500 is tail.

This sequence belongs to the intermediate filament family. As to quaternary structure, heterotetramer of two type I and two type II keratins.

This is Keratin, type II cuticular Hb1 from Bos taurus (Bovine).